The primary structure comprises 146 residues: Ribosome-binding factor A (146 aa).

Residues 127–146 form a disordered region; it reads EFAGEADPYKKPEDDEAAES.

This sequence belongs to the RbfA family. Monomer. Binds 30S ribosomal subunits, but not 50S ribosomal subunits or 70S ribosomes.

It is found in the cytoplasm. In terms of biological role, one of several proteins that assist in the late maturation steps of the functional core of the 30S ribosomal subunit. Associates with free 30S ribosomal subunits (but not with 30S subunits that are part of 70S ribosomes or polysomes). Required for efficient processing of 16S rRNA. May interact with the 5'-terminal helix region of 16S rRNA. This chain is Ribosome-binding factor A, found in Renibacterium salmoninarum (strain ATCC 33209 / DSM 20767 / JCM 11484 / NBRC 15589 / NCIMB 2235).